The primary structure comprises 224 residues: Fibronectin type III domain-containing protein 9 (224 aa).

Residues 1 to 101 (MNIEVGNISY…FHTLDKSPLA (101 aa)) enclose the Fibronectin type-III domain. The helical transmembrane segment at 113–133 (LWVLMAILLACFTAVLAFICL) threads the bilayer. A disordered region spans residues 175 to 224 (LQGLPLVEMPRKNSRDGAELDPEANQDAPDAGALQRGGGDPPAILPHCGE). The span at 183 to 192 (MPRKNSRDGA) shows a compositional bias: basic and acidic residues.

It is found in the membrane. The polypeptide is Fibronectin type III domain-containing protein 9 (FNDC9) (Homo sapiens (Human)).